Consider the following 326-residue polypeptide: MASLPILAITSGEPAGIGPELCAQLSRRDWPLRPVVLGDFELIRARAAGAAVVRAYMPDAPAAAGVLDVLHVPLNVAARPGRLDPANAGYVLALLDRAVHGCRSGEFGAIVTAPVHKGVINDAGVAFSGHTEYLAEHTGTPRVVMMLVGGGLRVALATTHLPLAAVPGAITPALLDETLRILHADLAGRFGLAAPRILVAGLNPHAGEGGHMGREEIDVIAPVLERLRGEGMRLVGPLPADTLFVPHTLGQGDAVLAMYHDQGLPVLKHASFGGGVNVTLGLPIIRTSVDHGTALDLAGTGRADPGSLFAAVELATAMVCNRDVAR.

H130 and T131 together coordinate substrate. A divalent metal cation contacts are provided by H160, H205, and H260. Residues K268, N277, and R286 each coordinate substrate.

It belongs to the PdxA family. Homodimer. Requires Zn(2+) as cofactor. Mg(2+) serves as cofactor. The cofactor is Co(2+).

It localises to the cytoplasm. The catalysed reaction is 4-(phosphooxy)-L-threonine + NAD(+) = 3-amino-2-oxopropyl phosphate + CO2 + NADH. It functions in the pathway cofactor biosynthesis; pyridoxine 5'-phosphate biosynthesis; pyridoxine 5'-phosphate from D-erythrose 4-phosphate: step 4/5. In terms of biological role, catalyzes the NAD(P)-dependent oxidation of 4-(phosphooxy)-L-threonine (HTP) into 2-amino-3-oxo-4-(phosphooxy)butyric acid which spontaneously decarboxylates to form 3-amino-2-oxopropyl phosphate (AHAP). This chain is 4-hydroxythreonine-4-phosphate dehydrogenase, found in Aromatoleum aromaticum (strain DSM 19018 / LMG 30748 / EbN1) (Azoarcus sp. (strain EbN1)).